A 153-amino-acid chain; its full sequence is UPF0756 membrane protein BCQ_4399 (153 aa).

Helical transmembrane passes span 8–28 (FLFI…TVAI), 54–74 (LGVT…EIGF), 87–107 (WIAL…VQLL), and 117–137 (LVFG…GPLI).

The protein belongs to the UPF0756 family.

The protein resides in the cell membrane. The polypeptide is UPF0756 membrane protein BCQ_4399 (Bacillus cereus (strain Q1)).